Consider the following 70-residue polypeptide: MTTIILNPNEPVEVALRRFRRSIEKTGLIKELRARTSYEKPTTERKRKKAAAVARLRKQVRRSMPPKKKY.

A disordered region spans residues 38–70 (YEKPTTERKRKKAAAVARLRKQVRRSMPPKKKY). Positions 45–70 (RKRKKAAAVARLRKQVRRSMPPKKKY) are enriched in basic residues.

Belongs to the bacterial ribosomal protein bS21 family.

This Burkholderia thailandensis (strain ATCC 700388 / DSM 13276 / CCUG 48851 / CIP 106301 / E264) protein is Small ribosomal subunit protein bS21C.